The sequence spans 291 residues: Formamidopyrimidine-DNA glycosylase (291 aa).

Residue Pro2 is the Schiff-base intermediate with DNA of the active site. The Proton donor role is filled by Glu3. Lys60 functions as the Proton donor; for beta-elimination activity in the catalytic mechanism. Residues His108 and Arg127 each coordinate DNA. The segment at Trp257 to Arg291 adopts an FPG-type zinc-finger fold. Residue Arg281 is the Proton donor; for delta-elimination activity of the active site.

It belongs to the FPG family. As to quaternary structure, monomer. Requires Zn(2+) as cofactor.

The catalysed reaction is Hydrolysis of DNA containing ring-opened 7-methylguanine residues, releasing 2,6-diamino-4-hydroxy-5-(N-methyl)formamidopyrimidine.. It carries out the reaction 2'-deoxyribonucleotide-(2'-deoxyribose 5'-phosphate)-2'-deoxyribonucleotide-DNA = a 3'-end 2'-deoxyribonucleotide-(2,3-dehydro-2,3-deoxyribose 5'-phosphate)-DNA + a 5'-end 5'-phospho-2'-deoxyribonucleoside-DNA + H(+). Functionally, involved in base excision repair of DNA damaged by oxidation or by mutagenic agents. Acts as a DNA glycosylase that recognizes and removes damaged bases. Has a preference for oxidized purines, such as 7,8-dihydro-8-oxoguanine (8-oxoG). Has AP (apurinic/apyrimidinic) lyase activity and introduces nicks in the DNA strand. Cleaves the DNA backbone by beta-delta elimination to generate a single-strand break at the site of the removed base with both 3'- and 5'-phosphates. This chain is Formamidopyrimidine-DNA glycosylase, found in Prochlorococcus marinus (strain MIT 9313).